The primary structure comprises 193 residues: Glycerol-3-phosphate acyltransferase (193 aa).

5 helical membrane passes run 4 to 24, 56 to 76, 80 to 100, 116 to 136, and 152 to 174; these read LALI…AVLI, GLVL…GYFL, PLLL…PLFF, APIG…IVLI, and PLFT…CLIV.

The protein belongs to the PlsY family. In terms of assembly, probably interacts with PlsX.

Its subcellular location is the cell inner membrane. The catalysed reaction is an acyl phosphate + sn-glycerol 3-phosphate = a 1-acyl-sn-glycero-3-phosphate + phosphate. Its pathway is lipid metabolism; phospholipid metabolism. Its function is as follows. Catalyzes the transfer of an acyl group from acyl-phosphate (acyl-PO(4)) to glycerol-3-phosphate (G3P) to form lysophosphatidic acid (LPA). This enzyme utilizes acyl-phosphate as fatty acyl donor, but not acyl-CoA or acyl-ACP. The polypeptide is Glycerol-3-phosphate acyltransferase (Aliivibrio salmonicida (strain LFI1238) (Vibrio salmonicida (strain LFI1238))).